The following is a 177-amino-acid chain: Ferritin light chain, oocyte isoform (177 aa).

The Ferritin-like diiron domain occupies 9–158 (QNYHEESEAG…DHLTNLRRVK (150 aa)). The Fe cation site is built by Glu-26, His-64, and Glu-106.

This sequence belongs to the ferritin family. As to quaternary structure, oligomer of 24 subunits. There are two types of subunits: L (light) chain and H (heavy) chain. The functional molecule is roughly spherical and contains a central cavity into which the insoluble mineral iron core is deposited.

In terms of biological role, stores iron in a soluble, non-toxic, readily available form. Important for iron homeostasis. Iron is taken up in the ferrous form and deposited as ferric hydroxides after oxidation. The protein is Ferritin light chain, oocyte isoform of Xenopus laevis (African clawed frog).